A 77-amino-acid chain; its full sequence is Putative ankyrin repeat protein RC0956 (77 aa).

The ANK repeat unit spans residues 8–38 (TDISPLMLASEYGQVTIVKYLLKHGNYNVKG).

This chain is Putative ankyrin repeat protein RC0956, found in Rickettsia conorii (strain ATCC VR-613 / Malish 7).